The sequence spans 370 residues: MSHPSPQAKPSNPSNPRVFFDVDIGGERVGRIVLELFADIVPKTAENFRALCTGEKGIGHTTGKPLHFKGCPFHRIIKKFMIQGGDFSNQNGTGGESIYGEKFEDENFHYKHDREGLLSMANAGRNTNGSQFFITTVPTPHLDGKHVVFGQVIKGIGVARILENVEVKGEKPAKLCVIAECGELKEGDDGGIFPKDGSGDSHPDFPEDADIDLKDVDKILLITEDLKNIGNTFFKSQNWEMAIKKYAEVLRYVDSSKAVIETADRAKLQPIALSCVLNIGACKLKMSNWQGAIDSCLEALELDPSNTKALYRRAQGWQGLKEYDQALADLKKAQGIAPEDKAIQAELLKVKQKIKAQKDKEKAVYAKMFA.

Position 5 is a phosphoserine (Ser5). Residues 19–183 (FFDVDIGGER…KLCVIAECGE (165 aa)) enclose the PPIase cyclophilin-type domain. At Lys171 the chain carries N6-acetyllysine. The segment at 185-215 (KEGDDGGIFPKDGSGDSHPDFPEDADIDLKD) is chaperone activity. A Phosphoserine modification is found at Ser198. Residues 214–370 (KDVDKILLIT…EKAVYAKMFA (157 aa)) form an interaction with HSP90AB1 region. TPR repeat units follow at residues 223–256 (TEDLKNIGNTFFKSQNWEMAIKKYAEVLRYVDSS), 273–306 (LSCVLNIGACKLKMSNWQGAIDSCLEALELDPSN), and 307–340 (TKALYRRAQGWQGLKEYDQALADLKKAQGIAPED).

It belongs to the cyclophilin-type PPIase family. PPIase D subfamily. In terms of assembly, identified in ESR1 or NR3C1/GCR steroid receptor-chaperone complexes. Found in HSP90 chaperone complexes with kinase clients LCK or EIF2AK1. Two monomers associate with one HSP90 homodimer. Interacts with HSP90AA1. Interacts with HSP90AB1; PPID and FKBP4 compete for binding to HSP90AB1 and the interaction is mutually exclusive with the PPID:HSPA8 interaction. Interacts with HSPA8; PPID and STIP1 but not FKBP4 compete for binding to HSPA8 and the interaction is mutually exclusive with the PPID:HSP90AB1 interaction. Interacts with S100A1 and S100A2; the interactions dissociate the PPID:HSP90AA1 interaction. Interacts with S100A6. Interacts with MYB, ILF2, XRCC6, RACK1 and RPS3. Interacts with cytoplasmic dynein 1 intermediate chain (DYNC1I1 or DYNC1I2). As to expression, widely expressed.

Its subcellular location is the cytoplasm. The protein resides in the nucleus. The protein localises to the nucleolus. It is found in the nucleoplasm. It carries out the reaction [protein]-peptidylproline (omega=180) = [protein]-peptidylproline (omega=0). Less sensitive to inhibition by cyclosporin A than is CYP-18. PPIase that catalyzes the cis-trans isomerization of proline imidic peptide bonds in oligopeptides and may therefore assist protein folding. Proposed to act as a co-chaperone in HSP90 complexes such as in unligated steroid receptors heterocomplexes. Different co-chaperones seem to compete for association with HSP90 thus establishing distinct HSP90-co-chaperone-receptor complexes with the potential to exert tissue-specific receptor activity control. May have a preference for estrogen receptor complexes and is not found in glucocorticoid receptor complexes. May be involved in cytoplasmic dynein-dependent movement of the receptor from the cytoplasm to the nucleus. May regulate MYB by inhibiting its DNA-binding activity. Involved in regulation of AHR signaling by promoting the formation of the AHR:ARNT dimer; the function is independent of HSP90 but requires the chaperone activity. Involved in regulation of UV radiation-induced apoptosis. Promotes cell viability in anaplastic lymphoma kinase-positive anaplastic large-cell lymphoma (ALK+ ALCL) cell lines. Functionally, (Microbial infection) May be involved in hepatitis C virus (HCV) replication and release. The chain is Peptidyl-prolyl cis-trans isomerase D from Homo sapiens (Human).